Consider the following 761-residue polypeptide: 5-methyltetrahydropteroyltriglutamate--homocysteine methyltransferase (761 aa).

5-methyltetrahydropteroyltri-L-glutamate contacts are provided by residues 16 to 19 (RELK) and Lys118. Residues 436-438 (IGS) and Glu489 contribute to the L-homocysteine site. L-methionine is bound by residues 436-438 (IGS) and Glu489. 5-methyltetrahydropteroyltri-L-glutamate is bound by residues 520–521 (RC) and Trp566. An L-homocysteine-binding site is contributed by Asp604. Residue Asp604 participates in L-methionine binding. Glu610 is a 5-methyltetrahydropteroyltri-L-glutamate binding site. 3 residues coordinate Zn(2+): His646, Cys648, and Glu670. Residue His699 is the Proton donor of the active site. A Zn(2+)-binding site is contributed by Cys731.

This sequence belongs to the vitamin-B12 independent methionine synthase family. The cofactor is Zn(2+).

The catalysed reaction is 5-methyltetrahydropteroyltri-L-glutamate + L-homocysteine = tetrahydropteroyltri-L-glutamate + L-methionine. Its pathway is amino-acid biosynthesis; L-methionine biosynthesis via de novo pathway; L-methionine from L-homocysteine (MetE route): step 1/1. In terms of biological role, catalyzes the transfer of a methyl group from 5-methyltetrahydrofolate to homocysteine resulting in methionine formation. In Vibrio cholerae serotype O1 (strain ATCC 39315 / El Tor Inaba N16961), this protein is 5-methyltetrahydropteroyltriglutamate--homocysteine methyltransferase.